We begin with the raw amino-acid sequence, 142 residues long: Small ribosomal subunit protein uS8c (142 aa).

This sequence belongs to the universal ribosomal protein uS8 family. In terms of assembly, part of the 30S ribosomal subunit.

Its subcellular location is the plastid. Its function is as follows. One of the primary rRNA binding proteins, it binds directly to 16S rRNA central domain where it helps coordinate assembly of the platform of the 30S subunit. The protein is Small ribosomal subunit protein uS8c (rps8) of Euglena longa (Euglenophycean alga).